Reading from the N-terminus, the 446-residue chain is Enolase (446 aa).

The substrate site is built by His164 and Glu173. The active-site Proton donor is Glu216. Asp251, Glu302, and Asp329 together coordinate Mg(2+). Substrate-binding residues include Glu302 and Asp329. The Proton acceptor role is filled by Lys354. Residues 381 to 384 (SHRS) and Lys405 each bind substrate.

Belongs to the enolase family. Homodimer. It depends on Mg(2+) as a cofactor.

It is found in the cytoplasm. The enzyme catalyses (2R)-2-phosphoglycerate = phosphoenolpyruvate + H2O. It functions in the pathway carbohydrate degradation; glycolysis; pyruvate from D-glyceraldehyde 3-phosphate: step 4/5. In Oryza sativa subsp. japonica (Rice), this protein is Enolase (ENO1).